We begin with the raw amino-acid sequence, 526 residues long: GMP synthase [glutamine-hydrolyzing] (526 aa).

A Glutamine amidotransferase type-1 domain is found at 14–208 (SILIVDFGSQ…VHDICGLAGD (195 aa)). The active-site Nucleophile is Cys-91. Residues His-182 and Glu-184 contribute to the active site. One can recognise a GMPS ATP-PPase domain in the interval 209–401 (WTMAEFRQTK…LGMPDVFVDR (193 aa)). 236–242 (SGGVDSS) is an ATP binding site.

Homodimer.

It catalyses the reaction XMP + L-glutamine + ATP + H2O = GMP + L-glutamate + AMP + diphosphate + 2 H(+). The protein operates within purine metabolism; GMP biosynthesis; GMP from XMP (L-Gln route): step 1/1. In terms of biological role, catalyzes the synthesis of GMP from XMP. This Zymomonas mobilis subsp. mobilis (strain ATCC 31821 / ZM4 / CP4) protein is GMP synthase [glutamine-hydrolyzing].